Reading from the N-terminus, the 578-residue chain is Protein BONZAI 1 (578 aa).

G2 carries the N-myristoyl glycine lipid modification. C2 domains lie at 26 to 163 and 176 to 303; these read ALGA…TSTL and QPHH…NFSL. Ca(2+) contacts are provided by D63, D69, D122, and D124. A VWFA domain is found at 341 to 560; that stretch reads NFMVAIDFTA…SVVQALLAEL (220 aa).

It belongs to the copine family. In terms of assembly, interacts (via VWA domain) with BAP1 and BAP2. Interacts with HSP70-1 and HSP70-2. Ca(2+) is required as a cofactor. In terms of processing, based on mass spectrometry analysis, the N-peptide must be modified and there might be additional modifications other than myristoylation. In terms of tissue distribution, expressed in roots and flowers and, at higher levels, in leaves and stems. Strongly expressed in growing tissues. Not detected in green siliques.

The protein resides in the cell membrane. In terms of biological role, negative regulator of cell death and defense responses. Negative regulator of several R genes, including SNC1. May have effects in promoting growth and development. May function in membrane trafficking and in fusion of vesicles with plasma membrane at low temperature. Exhibits calcium-dependent phospholipid binding properties. The polypeptide is Protein BONZAI 1 (BON1) (Arabidopsis thaliana (Mouse-ear cress)).